The following is a 743-amino-acid chain: tRNA(Met) cytidine acetyltransferase TmcA (743 aa).

ATP is bound by residues Q216, G241–L250, and R390. Residues L420–S604 enclose the N-acetyltransferase domain. Residues I531 to V533 and Q538 to S544 each bind acetyl-CoA.

It belongs to the RNA cytidine acetyltransferase family. TmcA subfamily.

The protein resides in the cytoplasm. It catalyses the reaction cytidine(34) in elongator tRNA(Met) + acetyl-CoA + ATP + H2O = N(4)-acetylcytidine(34) in elongator tRNA(Met) + ADP + phosphate + CoA + H(+). Its function is as follows. Catalyzes the formation of N(4)-acetylcytidine (ac(4)C) at the wobble position of tRNA(Met), by using acetyl-CoA as an acetyl donor and ATP (or GTP). This is tRNA(Met) cytidine acetyltransferase TmcA from Saccharolobus islandicus (strain Y.G.57.14 / Yellowstone #1) (Sulfolobus islandicus).